A 325-amino-acid polypeptide reads, in one-letter code: Protein FAM50B (325 aa).

Alanine 2 carries the post-translational modification N-acetylalanine. Residues 137–160 (RRAGNLGKNPDVDTSFLPDRDREE) are disordered.

The protein belongs to the FAM50 family.

This Macaca fascicularis (Crab-eating macaque) protein is Protein FAM50B (FAM50B).